The chain runs to 74 residues: Brevinin-2Ef (74 aa).

An N-terminal signal peptide occupies residues 1–22 (MFTMKKSLLLIFFLGTISLSLC). Residues 23-41 (QEERNADDDDGEMTEEEKR) constitute a propeptide that is removed on maturation. C68 and C74 are disulfide-bonded.

This sequence belongs to the frog skin active peptide (FSAP) family. Brevinin subfamily. As to expression, expressed by the skin glands.

It localises to the secreted. Its function is as follows. Shows antibacterial activity against representative Gram-negative and Gram-positive bacterial species, and hemolytic activity. In Pelophylax lessonae (Pool frog), this protein is Brevinin-2Ef.